A 175-amino-acid polypeptide reads, in one-letter code: SsrA-binding protein (175 aa).

2 disordered regions span residues 1 to 29 and 152 to 175; these read MTRNPQPDRSKTAPKNAKRDPVASGERDA and KRETDRRKTADRDAREAIARSRKS.

The protein belongs to the SmpB family.

It localises to the cytoplasm. In terms of biological role, required for rescue of stalled ribosomes mediated by trans-translation. Binds to transfer-messenger RNA (tmRNA), required for stable association of tmRNA with ribosomes. tmRNA and SmpB together mimic tRNA shape, replacing the anticodon stem-loop with SmpB. tmRNA is encoded by the ssrA gene; the 2 termini fold to resemble tRNA(Ala) and it encodes a 'tag peptide', a short internal open reading frame. During trans-translation Ala-aminoacylated tmRNA acts like a tRNA, entering the A-site of stalled ribosomes, displacing the stalled mRNA. The ribosome then switches to translate the ORF on the tmRNA; the nascent peptide is terminated with the 'tag peptide' encoded by the tmRNA and targeted for degradation. The ribosome is freed to recommence translation, which seems to be the essential function of trans-translation. This is SsrA-binding protein from Koribacter versatilis (strain Ellin345).